A 152-amino-acid polypeptide reads, in one-letter code: 3-dehydroquinate dehydratase (152 aa).

Tyr-25 functions as the Proton acceptor in the catalytic mechanism. Residues Asn-76, His-82, and Asp-89 each coordinate substrate. The Proton donor role is filled by His-102. Substrate-binding positions include 103–104 (LS) and Arg-113.

This sequence belongs to the type-II 3-dehydroquinase family. Homododecamer.

The catalysed reaction is 3-dehydroquinate = 3-dehydroshikimate + H2O. It participates in metabolic intermediate biosynthesis; chorismate biosynthesis; chorismate from D-erythrose 4-phosphate and phosphoenolpyruvate: step 3/7. Its function is as follows. Catalyzes a trans-dehydration via an enolate intermediate. This is 3-dehydroquinate dehydratase from Gloeothece citriformis (strain PCC 7424) (Cyanothece sp. (strain PCC 7424)).